Consider the following 152-residue polypeptide: Transcriptional regulator MraZ (152 aa).

SpoVT-AbrB domains follow at residues 5–52 (ATLV…PLPE) and 81–124 (ASEC…DETT).

Belongs to the MraZ family. Forms oligomers.

It is found in the cytoplasm. It localises to the nucleoid. Its function is as follows. Negatively regulates its own expression and that of the subsequent genes in the proximal part of the division and cell wall (dcw) gene cluster. Acts by binding directly to DNA. May also regulate the expression of genes outside the dcw cluster. The chain is Transcriptional regulator MraZ from Salmonella typhi.